Consider the following 185-residue polypeptide: V-type proton ATPase subunit E (185 aa).

Belongs to the V-ATPase E subunit family.

Functionally, produces ATP from ADP in the presence of a proton gradient across the membrane. In Deinococcus deserti (strain DSM 17065 / CIP 109153 / LMG 22923 / VCD115), this protein is V-type proton ATPase subunit E.